Consider the following 76-residue polypeptide: Theta defensin subunit C (76 aa).

Positions 1 to 22 (MRTFAFLTAMLLLVALHAQAEA) are cleaved as a signal peptide. A propeptide spanning residues 23-64 (RQARADEAAIQEQPGADDQGMAHSFTRNESAVLPLSESERGL) is cleaved from the precursor. Arg-65 is covalently cross-linked (Cyclopeptide (Arg-Cys) (interchain with C-73 in subunit A); in form BTD-4). Cys-68 and Cys-73 form a disulfide bridge. Cys-73 participates in a covalent cross-link: Cyclopeptide (Cys-Arg) (interchain with R-65 in subunit A); in form BTD-4. A propeptide spanning residues 74 to 76 (RLL) is cleaved from the precursor.

The protein belongs to the alpha-defensin family. Theta subfamily. In terms of assembly, BTD-4 is a cyclic heterodimer composed of subunits A and C; disulfide-linked. Forms a cyclic peptide with subunit A (BTD-4). An additional intersubunit disulfide bond is formed.

Functionally, BTD-4 has antimicrobial activity against the Gram-negative bacterium E.coli ML35, the Gram-positive bacterium S.aureus 502a, and the fungus C.albicans 16820. This chain is Theta defensin subunit C (BTDC), found in Papio anubis (Olive baboon).